Reading from the N-terminus, the 283-residue chain is DegV domain-containing protein CPE0304 (283 aa).

The region spanning 3–281 (VKVITDSTSC…VKSVGIAYAR (279 aa)) is the DegV domain. Hexadecanoate contacts are provided by serine 60 and serine 92.

In terms of biological role, may bind long-chain fatty acids, such as palmitate, and may play a role in lipid transport or fatty acid metabolism. The protein is DegV domain-containing protein CPE0304 of Clostridium perfringens (strain 13 / Type A).